We begin with the raw amino-acid sequence, 167 residues long: Phosphopantetheine adenylyltransferase (167 aa).

Residue serine 9 coordinates substrate. Residues 9–10 (SF) and histidine 17 contribute to the ATP site. Residues lysine 41, leucine 73, and lysine 87 each coordinate substrate. ATP contacts are provided by residues 88-90 (GLR), glutamate 98, and 123-129 (YSYLSSS).

It belongs to the bacterial CoaD family. In terms of assembly, homohexamer. Requires Mg(2+) as cofactor.

The protein resides in the cytoplasm. It catalyses the reaction (R)-4'-phosphopantetheine + ATP + H(+) = 3'-dephospho-CoA + diphosphate. Its pathway is cofactor biosynthesis; coenzyme A biosynthesis; CoA from (R)-pantothenate: step 4/5. Functionally, reversibly transfers an adenylyl group from ATP to 4'-phosphopantetheine, yielding dephospho-CoA (dPCoA) and pyrophosphate. In Caldicellulosiruptor bescii (strain ATCC BAA-1888 / DSM 6725 / KCTC 15123 / Z-1320) (Anaerocellum thermophilum), this protein is Phosphopantetheine adenylyltransferase.